The primary structure comprises 86 residues: RNA-binding protein Hfq (86 aa).

The 60-residue stretch at 9–68 folds into the Sm domain; it reads DIFLNVLRRERIQVSIYLFNGIKLQGHIESFDQFVIVLKNTISQMVYKHAVSTIVPSKFV.

This sequence belongs to the Hfq family. As to quaternary structure, homohexamer.

In terms of biological role, RNA chaperone that binds small regulatory RNA (sRNAs) and mRNAs to facilitate mRNA translational regulation in response to envelope stress, environmental stress and changes in metabolite concentrations. Also binds with high specificity to tRNAs. This chain is RNA-binding protein Hfq, found in Baumannia cicadellinicola subsp. Homalodisca coagulata.